The chain runs to 278 residues: MAAIDGLPPLREVIRAHGLSAKKQLGQNFLLDLNLTAKIARLAGDLKGSDVLEVGPGPGGLTRGLLAEGARRVLAIEKDARCLPALAEVAAAWPGRLEVLNADALEVDVAARLTPPIRIVANLPYNVGTELLTRWLSSGWPPFWESLTLMFQKEVAERIVARPGSKAYGRLALLSQWRTEPKIVLTLPPEAFTPPPAIHSAVVHFTRLAGPRYPADAAVLSRVTAMAFNQRRKMLRSSLKGLAPDIETVLRDAGIEPTQRAEELSLEAFCALARRVAG.

N28, L30, G55, E77, D103, and N122 together coordinate S-adenosyl-L-methionine.

It belongs to the class I-like SAM-binding methyltransferase superfamily. rRNA adenine N(6)-methyltransferase family. RsmA subfamily.

The protein resides in the cytoplasm. The enzyme catalyses adenosine(1518)/adenosine(1519) in 16S rRNA + 4 S-adenosyl-L-methionine = N(6)-dimethyladenosine(1518)/N(6)-dimethyladenosine(1519) in 16S rRNA + 4 S-adenosyl-L-homocysteine + 4 H(+). Specifically dimethylates two adjacent adenosines (A1518 and A1519) in the loop of a conserved hairpin near the 3'-end of 16S rRNA in the 30S particle. May play a critical role in biogenesis of 30S subunits. In Cereibacter sphaeroides (strain ATCC 17025 / ATH 2.4.3) (Rhodobacter sphaeroides), this protein is Ribosomal RNA small subunit methyltransferase A.